Here is an 80-residue protein sequence, read N- to C-terminus: Acyl carrier protein (80 aa).

The 76-residue stretch at 2-77 (SEINQKVVDI…QVVEYLEKRL (76 aa)) folds into the Carrier domain. Ser-37 carries the O-(pantetheine 4'-phosphoryl)serine modification.

Belongs to the acyl carrier protein (ACP) family. 4'-phosphopantetheine is transferred from CoA to a specific serine of apo-ACP by AcpS. This modification is essential for activity because fatty acids are bound in thioester linkage to the sulfhydryl of the prosthetic group.

It localises to the cytoplasm. Its pathway is lipid metabolism; fatty acid biosynthesis. Carrier of the growing fatty acid chain in fatty acid biosynthesis. This Amoebophilus asiaticus (strain 5a2) protein is Acyl carrier protein.